The chain runs to 407 residues: Argininosuccinate synthase (407 aa).

ATP-binding positions include 10–18 (AYSGGLDTS) and Ala37. 2 residues coordinate L-citrulline: Tyr90 and Ser95. Gly120 contacts ATP. Thr122, Asn126, and Asp127 together coordinate L-aspartate. Asn126 lines the L-citrulline pocket. L-citrulline is bound by residues Arg130, Ser181, Ser190, Glu266, and Tyr278.

The protein belongs to the argininosuccinate synthase family. Type 1 subfamily. In terms of assembly, homotetramer.

The protein localises to the cytoplasm. It catalyses the reaction L-citrulline + L-aspartate + ATP = 2-(N(omega)-L-arginino)succinate + AMP + diphosphate + H(+). Its pathway is amino-acid biosynthesis; L-arginine biosynthesis; L-arginine from L-ornithine and carbamoyl phosphate: step 2/3. The chain is Argininosuccinate synthase from Ruegeria sp. (strain TM1040) (Silicibacter sp.).